A 1039-amino-acid chain; its full sequence is FERM domain-containing protein 4A (1039 aa).

One can recognise an FERM domain in the interval 20-322 (RRCQVHLLDD…SQHQFYLDRK (303 aa)). The segment at 358–420 (KGKIISGSSG…KLCLREAELT (63 aa)) is necessary for interaction with CYTH1. The span at 366-382 (SGSLLSSGSQESDSSQS) shows a compositional bias: low complexity. The tract at residues 366–386 (SGSLLSSGSQESDSSQSAKKD) is disordered. Positions 382–416 (SAKKDMLAALKSRQEALEETLRQRLEELKKLCLRE) form a coiled coil. Phosphoserine is present on S530. Residues 553 to 680 (DEDSQVTSTI…MPSTPDLRVR (128 aa)) form a disordered region. Residues 571-586 (GLPPRPPSHNRPPPPQ) are compositionally biased toward pro residues. Residues 579 to 939 (HNRPPPPQSL…QWYQRSTASH (361 aa)) form a necessary for tight junction and adherens junction localization; Requires for interaction with PARD3 region. Phosphoserine is present on residues S604 and S615. Positions 623-638 (VKKRSSHSHSSSHKRF) are enriched in basic residues. A phosphoserine mark is found at S681 and S711. Disordered stretches follow at residues 713–756 (ESQG…HSSS) and 772–813 (AEDS…AGGA). Residues 788–800 (RAAGALGSASSGS) are compositionally biased toward low complexity. 3 positions are modified to phosphoserine: S800, S872, and S901. Disordered stretches follow at residues 879-968 (FKES…STFV) and 980-1039 (CKAT…STDE). Residues 896-905 (LTPSRSQILR) show a composition bias toward polar residues. Basic and acidic residues predominate over residues 912-929 (EGAHDKGAGRAAVSDELR). Over residues 946–966 (SHTSSTSSDSGSQYSTSSQST) the composition is skewed to low complexity. Composition is skewed to polar residues over residues 986-1000 (ALPQ…SSEI) and 1013-1023 (TWQTGEATENS).

Interacts (via coiled-coil domain) with CYTH1 (via coiled-coil domain). Interacts with PARD3 (via coiled-coil domain). Found in a complex with PARD3, CYTH1 and FRMD4A. Interacts with CYTH2. Interacts with CYTH3.

Its subcellular location is the cytoplasm. It is found in the cytoskeleton. It localises to the cell junction. The protein resides in the adherens junction. The protein localises to the tight junction. In terms of biological role, scaffolding protein that regulates epithelial cell polarity by connecting ARF6 activation with the PAR3 complex. Plays a redundant role with FRMD4B in epithelial polarization. May regulate MAPT secretion by activating ARF6-signaling. The sequence is that of FERM domain-containing protein 4A from Homo sapiens (Human).